A 498-amino-acid polypeptide reads, in one-letter code: GPI mannosyltransferase 4 (498 aa).

Residues 11-31 traverse the membrane as a helical segment; it reads FYLLTIVFRFVFTLSDSYIHP. A glycan (N-linked (GlcNAc...) asparagine) is linked at N47. The helical transmembrane segment at 63 to 83 threads the bilayer; it reads SLAPLYFIYGPLLYFIKFFKL. N-linked (GlcNAc...) asparagine glycosylation is present at N84. The next 9 helical transmembrane spans lie at 96 to 116, 140 to 160, 189 to 209, 222 to 242, 247 to 267, 282 to 302, 310 to 330, 332 to 348, and 350 to 370; these read LQIS…MLPS, LFSN…IDDL, LGIF…WFVM, LVMG…ILFG, VVAE…NLLY, YYTH…IFFV, TPFL…HQEL, FLIP…DFTL, and WVQP…SILM. N-linked (GlcNAc...) asparagine glycans are attached at residues N408 and N473.

Belongs to the glycosyltransferase 22 family. PIGZ subfamily.

Its subcellular location is the endoplasmic reticulum membrane. It functions in the pathway glycolipid biosynthesis; glycosylphosphatidylinositol-anchor biosynthesis. Functionally, alpha-1,2-mannosyltransferase involved in glycosylphosphatidylinositol-anchor biosynthesis. Transfers a fourth mannose to trimannosyl-GPIs during GPI precursor assembly. The presence of a fourth mannose in GPI is essential in fungi. This is GPI mannosyltransferase 4 (SMP3) from Candida albicans (strain SC5314 / ATCC MYA-2876) (Yeast).